The chain runs to 865 residues: Xylosyltransferase 2 (865 aa).

Topologically, residues 1–15 are cytoplasmic; the sequence is MVASARVQKLVRRYK. Residues 16 to 36 traverse the membrane as a helical; Signal-anchor for type II membrane protein segment; it reads LAIATALAILLLQGLVVWSFS. Topologically, residues 37–865 are lumenal; the sequence is GLEEDEPGEK…GPVKADGRLR (829 aa). The interval 39-157 is disordered; that stretch reads EEDEPGEKGR…EGAPQPTDNG (119 aa). Over residues 53–65 the composition is skewed to basic and acidic residues; that stretch reads RPLDPGEGSKDTD. Residues 73-82 are compositionally biased toward basic residues; it reads SAGRRHGRWR. N122 carries N-linked (GlcNAc...) asparagine glycosylation. The segment covering 125–137 has biased composition (low complexity); that stretch reads GAAAGEALVGAAG. Cystine bridges form between C162/C190, C206/C448, C467/C480, and C469/C478. UDP-alpha-D-xylose-binding positions include V239, D267, and 296 to 298; that span reads TIW. N-linked (GlcNAc...) asparagine glycosylation occurs at N327. 400–401 provides a ligand contact to UDP-alpha-D-xylose; sequence DW. Residues S481 and 504–505 each bind UDP-alpha-D-xylose; that span reads RK. 2 disulfide bridges follow: C581-C833 and C826-C839. The N-linked (GlcNAc...) asparagine glycan is linked to N683.

It belongs to the glycosyltransferase 14 family. XylT subfamily. Monomer. Requires Mg(2+) as cofactor. Mn(2+) is required as a cofactor. Post-translationally, contains disulfide bonds.

It is found in the golgi apparatus membrane. It localises to the secreted. It catalyses the reaction UDP-alpha-D-xylose + L-seryl-[protein] = 3-O-(beta-D-xylosyl)-L-seryl-[protein] + UDP + H(+). Its pathway is glycan metabolism; chondroitin sulfate biosynthesis. It participates in glycan metabolism; heparan sulfate biosynthesis. Functionally, catalyzes the first step in the biosynthesis of chondroitin sulfate, heparan sulfate and dermatan sulfate proteoglycans, such as DCN. Transfers D-xylose from UDP-D-xylose to specific serine residues of the core protein. In Canis lupus familiaris (Dog), this protein is Xylosyltransferase 2 (XYLT2).